The primary structure comprises 594 residues: UvrABC system protein C (594 aa).

The GIY-YIG domain occupies 13–99; that stretch reads NSSGVYQYFD…IKQLKPKYNI (87 aa). The UVR domain maps to 205–240; it reads DRLIKELELKMERLSSKLRFEEALIYRDRIAKIQKI.

It belongs to the UvrC family. As to quaternary structure, interacts with UvrB in an incision complex.

It localises to the cytoplasm. In terms of biological role, the UvrABC repair system catalyzes the recognition and processing of DNA lesions. UvrC both incises the 5' and 3' sides of the lesion. The N-terminal half is responsible for the 3' incision and the C-terminal half is responsible for the 5' incision. The protein is UvrABC system protein C of Helicobacter pylori (strain P12).